Here is a 331-residue protein sequence, read N- to C-terminus: Glyceraldehyde-3-phosphate dehydrogenase (331 aa).

NAD(+) is bound by residues 12–13, Asp34, Arg78, and Thr120; that span reads RI. Residues 149-151, Thr180, 209-210, and Arg232 contribute to the D-glyceraldehyde 3-phosphate site; these read SCT and TG. Cys150 functions as the Nucleophile in the catalytic mechanism. Asn314 serves as a coordination point for NAD(+).

The protein belongs to the glyceraldehyde-3-phosphate dehydrogenase family. Homotetramer.

It is found in the cytoplasm. The enzyme catalyses D-glyceraldehyde 3-phosphate + phosphate + NAD(+) = (2R)-3-phospho-glyceroyl phosphate + NADH + H(+). It functions in the pathway carbohydrate degradation; glycolysis; pyruvate from D-glyceraldehyde 3-phosphate: step 1/5. Functionally, catalyzes the oxidative phosphorylation of glyceraldehyde 3-phosphate (G3P) to 1,3-bisphosphoglycerate (BPG) using the cofactor NAD. The first reaction step involves the formation of a hemiacetal intermediate between G3P and a cysteine residue, and this hemiacetal intermediate is then oxidized to a thioester, with concomitant reduction of NAD to NADH. The reduced NADH is then exchanged with the second NAD, and the thioester is attacked by a nucleophilic inorganic phosphate to produce BPG. This chain is Glyceraldehyde-3-phosphate dehydrogenase (gapA), found in Salmonella typhi.